The following is a 977-amino-acid chain: Monofunctional C1-tetrahydrofolate synthase, mitochondrial (977 aa).

The transit peptide at 1–31 (MSVRLPLLLRQLGRQQLPSGPACRLRELCRS) directs the protein to the mitochondrion. Residues 29 to 71 (CRSGSRSSSSGGGDPEGLRGRRLQDGQTFSSHGPGNPEAPGMD) are disordered. Positions 32 to 347 (GSRSSSSGGG…REQQHRRWRL (316 aa)) are methylenetetrahydrofolate dehydrogenase and cyclohydrolase. An N6-acetyllysine; alternate modification is found at K188. The residue at position 188 (K188) is an N6-succinyllysine; alternate. The segment at 348–977 (HCLKLQPLSP…TETEQVKGLF (630 aa)) is formyltetrahydrofolate synthetase. S356 is subject to Phosphoserine. 422 to 429 (TPLGEGKS) provides a ligand contact to ATP. Position 595 is an N6-succinyllysine (K595).

This sequence in the N-terminal section; belongs to the tetrahydrofolate dehydrogenase/cyclohydrolase family. In the C-terminal section; belongs to the formate--tetrahydrofolate ligase family. As to quaternary structure, homodimer.

It localises to the mitochondrion. The enzyme catalyses (6S)-5,6,7,8-tetrahydrofolate + formate + ATP = (6R)-10-formyltetrahydrofolate + ADP + phosphate. It functions in the pathway one-carbon metabolism; tetrahydrofolate interconversion. Its function is as follows. May provide the missing metabolic reaction required to link the mitochondria and the cytoplasm in the mammalian model of one-carbon folate metabolism complementing thus the enzymatic activities of MTHFD2. The polypeptide is Monofunctional C1-tetrahydrofolate synthase, mitochondrial (Mthfd1l) (Mus musculus (Mouse)).